We begin with the raw amino-acid sequence, 218 residues long: Small ribosomal subunit protein uS4 (218 aa).

The S4 RNA-binding domain occupies 111 to 175 (RRLQTQVLRL…SPLKNESHPE (65 aa)). The segment at 192–218 (KAAAEAKQAREKPPERGGGRRKRGGRR) is disordered. A compositionally biased stretch (basic and acidic residues) spans 198 to 209 (KQAREKPPERGG).

It belongs to the universal ribosomal protein uS4 family. Part of the 30S ribosomal subunit. Contacts protein S5. The interaction surface between S4 and S5 is involved in control of translational fidelity.

Its function is as follows. One of the primary rRNA binding proteins, it binds directly to 16S rRNA where it nucleates assembly of the body of the 30S subunit. Functionally, with S5 and S12 plays an important role in translational accuracy. In Methanosarcina acetivorans (strain ATCC 35395 / DSM 2834 / JCM 12185 / C2A), this protein is Small ribosomal subunit protein uS4.